A 41-amino-acid polypeptide reads, in one-letter code: Photosystem II reaction center protein L (41 aa).

Residues 20–40 (LFLGLLLVFVLGILSPATSLT) traverse the membrane as a helical segment.

The protein belongs to the PsbL family. In terms of assembly, PSII is composed of 1 copy each of membrane proteins PsbA, PsbB, PsbC, PsbD, PsbE, PsbF, PsbH, PsbI, PsbJ, PsbK, PsbL, PsbM, PsbT, PsbX, PsbY, PsbZ, Psb30/Ycf12, peripheral proteins PsbO, CyanoQ (PsbQ), PsbU, PsbV and a large number of cofactors. It forms dimeric complexes.

Its subcellular location is the cellular thylakoid membrane. Functionally, one of the components of the core complex of photosystem II (PSII). PSII is a light-driven water:plastoquinone oxidoreductase that uses light energy to abstract electrons from H(2)O, generating O(2) and a proton gradient subsequently used for ATP formation. It consists of a core antenna complex that captures photons, and an electron transfer chain that converts photonic excitation into a charge separation. This subunit is found at the monomer-monomer interface and is required for correct PSII assembly and/or dimerization. In Synechococcus sp. (strain ATCC 27144 / PCC 6301 / SAUG 1402/1) (Anacystis nidulans), this protein is Photosystem II reaction center protein L.